The chain runs to 103 residues: Pyrimidine/purine nucleoside phosphorylase (103 aa).

This sequence belongs to the nucleoside phosphorylase PpnP family.

It catalyses the reaction a purine D-ribonucleoside + phosphate = a purine nucleobase + alpha-D-ribose 1-phosphate. The enzyme catalyses adenosine + phosphate = alpha-D-ribose 1-phosphate + adenine. It carries out the reaction cytidine + phosphate = cytosine + alpha-D-ribose 1-phosphate. The catalysed reaction is guanosine + phosphate = alpha-D-ribose 1-phosphate + guanine. It catalyses the reaction inosine + phosphate = alpha-D-ribose 1-phosphate + hypoxanthine. The enzyme catalyses thymidine + phosphate = 2-deoxy-alpha-D-ribose 1-phosphate + thymine. It carries out the reaction uridine + phosphate = alpha-D-ribose 1-phosphate + uracil. The catalysed reaction is xanthosine + phosphate = alpha-D-ribose 1-phosphate + xanthine. Functionally, catalyzes the phosphorolysis of diverse nucleosides, yielding D-ribose 1-phosphate and the respective free bases. Can use uridine, adenosine, guanosine, cytidine, thymidine, inosine and xanthosine as substrates. Also catalyzes the reverse reactions. The protein is Pyrimidine/purine nucleoside phosphorylase of Methylococcus capsulatus (strain ATCC 33009 / NCIMB 11132 / Bath).